The following is a 334-amino-acid chain: Nucleoid-associated protein SG1574 (334 aa).

The protein belongs to the YejK family.

The protein localises to the cytoplasm. It localises to the nucleoid. This is Nucleoid-associated protein SG1574 from Sodalis glossinidius (strain morsitans).